The sequence spans 339 residues: Dihydroorotate dehydrogenase (quinone) (339 aa).

FMN contacts are provided by residues 62–66 (AGMDK) and Thr86. Lys66 provides a ligand contact to substrate. 111–115 (NRMGF) contacts substrate. FMN-binding residues include Asn139 and Asn172. Position 172 (Asn172) interacts with substrate. Ser175 acts as the Nucleophile in catalysis. Residue Asn177 coordinates substrate. Residues Lys217 and Thr245 each coordinate FMN. 246–247 (NT) is a binding site for substrate. FMN-binding positions include Gly268, Gly297, and 318-319 (YS).

The protein belongs to the dihydroorotate dehydrogenase family. Type 2 subfamily. Monomer. It depends on FMN as a cofactor.

The protein resides in the cell membrane. The catalysed reaction is (S)-dihydroorotate + a quinone = orotate + a quinol. Its pathway is pyrimidine metabolism; UMP biosynthesis via de novo pathway; orotate from (S)-dihydroorotate (quinone route): step 1/1. Catalyzes the conversion of dihydroorotate to orotate with quinone as electron acceptor. In Shewanella putrefaciens (strain CN-32 / ATCC BAA-453), this protein is Dihydroorotate dehydrogenase (quinone).